The sequence spans 337 residues: Ketol-acid reductoisomerase (NADP(+)) (337 aa).

In terms of domain architecture, KARI N-terminal Rossmann spans 3–183 (VEMFYDDDAD…GGTRAGVIKT (181 aa)). NADP(+)-binding positions include 26–29 (YGSQ), lysine 49, serine 52, serine 54, and 84–87 (DTAQ). Residue histidine 109 is part of the active site. Glycine 135 is a binding site for NADP(+). The region spanning 184–329 (TFKEETETDL…KKLRDLMSWV (146 aa)) is the KARI C-terminal knotted domain. Residues aspartate 192, glutamate 196, glutamate 228, and glutamate 232 each coordinate Mg(2+). Serine 253 is a binding site for substrate.

The protein belongs to the ketol-acid reductoisomerase family. The cofactor is Mg(2+).

The catalysed reaction is (2R)-2,3-dihydroxy-3-methylbutanoate + NADP(+) = (2S)-2-acetolactate + NADPH + H(+). It carries out the reaction (2R,3R)-2,3-dihydroxy-3-methylpentanoate + NADP(+) = (S)-2-ethyl-2-hydroxy-3-oxobutanoate + NADPH + H(+). The protein operates within amino-acid biosynthesis; L-isoleucine biosynthesis; L-isoleucine from 2-oxobutanoate: step 2/4. It functions in the pathway amino-acid biosynthesis; L-valine biosynthesis; L-valine from pyruvate: step 2/4. Functionally, involved in the biosynthesis of branched-chain amino acids (BCAA). Catalyzes an alkyl-migration followed by a ketol-acid reduction of (S)-2-acetolactate (S2AL) to yield (R)-2,3-dihydroxy-isovalerate. In the isomerase reaction, S2AL is rearranged via a Mg-dependent methyl migration to produce 3-hydroxy-3-methyl-2-ketobutyrate (HMKB). In the reductase reaction, this 2-ketoacid undergoes a metal-dependent reduction by NADPH to yield (R)-2,3-dihydroxy-isovalerate. The polypeptide is Ketol-acid reductoisomerase (NADP(+)) (Rhodococcus erythropolis (strain PR4 / NBRC 100887)).